The sequence spans 116 residues: Alpha-amylase inhibitor 5 (116 aa).

5 cysteine pairs are disulfide-bonded: cysteine 4–cysteine 55, cysteine 18–cysteine 44, cysteine 27–cysteine 77, cysteine 45–cysteine 95, and cysteine 57–cysteine 106.

This sequence belongs to the protease inhibitor I6 (cereal trypsin/alpha-amylase inhibitor) family.

It localises to the secreted. In terms of biological role, alpha-amylase inhibitor. This is Alpha-amylase inhibitor 5 from Sorghum bicolor (Sorghum).